The following is a 467-amino-acid chain: MLTPVVSYSTVKEVKGPLLVIERTRGVAYGEIGEVVGPDGEPRRVQVIEVGTDYAVAQVLGGTLGLPAKGSTVRFYGKTLKLPVSEELIGRILDGKGQPRDHMPLPPPEDFRDVNGEPLNPYSREYPEEPIETGISAIDGLYTLVRGQKLPIFSGTGLPHNLMAAQVVRQSTVRGSEEGFAVVFVGVGIKTEEAIFFMDEFRKTGALRRAVAVLNLASDPVAERILAPRVGLTIAEYLAWQLGYHVLVVITDMTNYCEGLRELSSGRGELPGRRGYPGYMYTDLATIYERAGKARGKKGSVTQFPILTMPHDDITHPIPDLTGYITEGQLVLSRSMWGKGIYPPFDVIMSLSRLAKDAIGEGKTREDHKDVANTLISAYSKALELRNLATLVGERNLGWRERRYLRFADAFEQRFIKQGYYERRSFEETLDIGWDVMSILPEDELTNARPQITQKFYRRHIFESIKL.

The disordered stretch occupies residues 95–114 (GKGQPRDHMPLPPPEDFRDV).

It belongs to the ATPase alpha/beta chains family. Has multiple subunits with at least A(3), B(3), C, D, E, F, H, I and proteolipid K(x).

It localises to the cell membrane. Its function is as follows. Component of the A-type ATP synthase that produces ATP from ADP in the presence of a proton gradient across the membrane. The B chain is a regulatory subunit. The polypeptide is A-type ATP synthase subunit B (Pyrobaculum neutrophilum (strain DSM 2338 / JCM 9278 / NBRC 100436 / V24Sta) (Thermoproteus neutrophilus)).